The chain runs to 288 residues: Probable prolyl 4-hydroxylase 6 (288 aa).

Topologically, residues 1–4 are cytoplasmic; that stretch reads MDSQ. Residues 5–27 traverse the membrane as a helical; Signal-anchor for type II membrane protein segment; sequence YFLAFSLSLLLIFSQISSFSFSV. Topologically, residues 28-288 are lumenal; that stretch reads DPTRITQLSW…GFCRKSCKAC (261 aa). Positions 116–238 constitute a Fe2OG dioxygenase domain; it reads NGEALQILHY…KWSATRWIHV (123 aa). 2 residues coordinate Fe cation: His-134 and Asp-136. 2 N-linked (GlcNAc...) asparagine glycosylation sites follow: Asn-160 and Asn-210. His-219 lines the Fe cation pocket. Lys-229 serves as a coordination point for 2-oxoglutarate. The ShKT domain maps to 248–288; it reads CVDDHESCQEWADAGECEKNPMYMVGSETSLGFCRKSCKAC. 3 disulfide bridges follow: Cys-248/Cys-288, Cys-255/Cys-281, and Cys-264/Cys-285.

It belongs to the P4HA family. Fe(2+) is required as a cofactor. It depends on L-ascorbate as a cofactor.

Its subcellular location is the endoplasmic reticulum membrane. It carries out the reaction L-prolyl-[collagen] + 2-oxoglutarate + O2 = trans-4-hydroxy-L-prolyl-[collagen] + succinate + CO2. In terms of biological role, catalyzes the post-translational formation of 4-hydroxyproline in -Xaa-Pro-Gly- sequences in proline-rich peptide sequences of plant glycoproteins and other proteins. Hydroxyprolines are important constituent of many plant cell wall glycoproteins such as extensins, hydroxyproline-rich glycoproteins, lectins and arabinogalactan proteins. The chain is Probable prolyl 4-hydroxylase 6 from Arabidopsis thaliana (Mouse-ear cress).